Consider the following 480-residue polypeptide: Glutamate--tRNA ligase (480 aa).

Residues 9–19 carry the 'HIGH' region motif; sequence PSPTGNLHIGT. A 'KMSKS' region motif is present at residues 250–254; it reads KLSKR. ATP is bound at residue Lys253.

It belongs to the class-I aminoacyl-tRNA synthetase family. Glutamate--tRNA ligase type 1 subfamily. As to quaternary structure, monomer.

Its subcellular location is the cytoplasm. The catalysed reaction is tRNA(Glu) + L-glutamate + ATP = L-glutamyl-tRNA(Glu) + AMP + diphosphate. Functionally, catalyzes the attachment of glutamate to tRNA(Glu) in a two-step reaction: glutamate is first activated by ATP to form Glu-AMP and then transferred to the acceptor end of tRNA(Glu). The sequence is that of Glutamate--tRNA ligase from Microcystis aeruginosa (strain NIES-843 / IAM M-2473).